A 159-amino-acid chain; its full sequence is Cyclic pyranopterin monophosphate synthase (159 aa).

Substrate-binding positions include 76-78 (LCH) and 114-115 (ME). The active site involves Asp-129.

The protein belongs to the MoaC family. In terms of assembly, homohexamer; trimer of dimers.

The enzyme catalyses (8S)-3',8-cyclo-7,8-dihydroguanosine 5'-triphosphate = cyclic pyranopterin phosphate + diphosphate. Its pathway is cofactor biosynthesis; molybdopterin biosynthesis. In terms of biological role, catalyzes the conversion of (8S)-3',8-cyclo-7,8-dihydroguanosine 5'-triphosphate to cyclic pyranopterin monophosphate (cPMP). The polypeptide is Cyclic pyranopterin monophosphate synthase (Shewanella oneidensis (strain ATCC 700550 / JCM 31522 / CIP 106686 / LMG 19005 / NCIMB 14063 / MR-1)).